The primary structure comprises 754 residues: 5-methyltetrahydropteroyltriglutamate--homocysteine methyltransferase (754 aa).

Residues 17-20 (RELK) and K117 contribute to the 5-methyltetrahydropteroyltri-L-glutamate site. L-homocysteine contacts are provided by residues 431–433 (IGS) and E484. L-methionine contacts are provided by residues 431 to 433 (IGS) and E484. Residues 515–516 (RC) and W561 contribute to the 5-methyltetrahydropteroyltri-L-glutamate site. D599 provides a ligand contact to L-homocysteine. Residue D599 participates in L-methionine binding. E605 contacts 5-methyltetrahydropteroyltri-L-glutamate. Residues H641, C643, and E665 each coordinate Zn(2+). The Proton donor role is filled by H694. Zn(2+) is bound at residue C726.

The protein belongs to the vitamin-B12 independent methionine synthase family. Requires Zn(2+) as cofactor.

It catalyses the reaction 5-methyltetrahydropteroyltri-L-glutamate + L-homocysteine = tetrahydropteroyltri-L-glutamate + L-methionine. It participates in amino-acid biosynthesis; L-methionine biosynthesis via de novo pathway; L-methionine from L-homocysteine (MetE route): step 1/1. Its function is as follows. Catalyzes the transfer of a methyl group from 5-methyltetrahydrofolate to homocysteine resulting in methionine formation. This is 5-methyltetrahydropteroyltriglutamate--homocysteine methyltransferase from Salmonella dublin (strain CT_02021853).